We begin with the raw amino-acid sequence, 118 residues long: Large ribosomal subunit protein uL18 (118 aa).

The protein belongs to the universal ribosomal protein uL18 family. As to quaternary structure, part of the 50S ribosomal subunit; part of the 5S rRNA/L5/L18/L25 subcomplex. Contacts the 5S and 23S rRNAs.

This is one of the proteins that bind and probably mediate the attachment of the 5S RNA into the large ribosomal subunit, where it forms part of the central protuberance. The protein is Large ribosomal subunit protein uL18 of Rickettsia akari (strain Hartford).